A 308-amino-acid polypeptide reads, in one-letter code: Urease accessory protein UreD (308 aa).

It belongs to the UreD family. As to quaternary structure, ureD, UreF and UreG form a complex that acts as a GTP-hydrolysis-dependent molecular chaperone, activating the urease apoprotein by helping to assemble the nickel containing metallocenter of UreC. The UreE protein probably delivers the nickel.

It is found in the cytoplasm. Required for maturation of urease via the functional incorporation of the urease nickel metallocenter. This chain is Urease accessory protein UreD, found in Psychromonas ingrahamii (strain DSM 17664 / CCUG 51855 / 37).